A 661-amino-acid chain; its full sequence is uncharacterized protein (661 aa).

A signal peptide spans 1–24 (MKTLKTLKIFIIVFIASVSLASFA). 6 helical membrane-spanning segments follow: residues 226–246 (IIGA…ALNT), 254–274 (IALF…LGPL), 410–430 (IILA…LYFI), 436–456 (CMIT…MALF), 469–489 (VCIS…LLIT), and 562–582 (VVSI…FYYF). The disordered stretch occupies residues 629–661 (GKPLVGDKPGVGGKRKEGEQQGGDLASGSGGGK).

It belongs to the TrbL/VirB6 family.

It is found in the cell membrane. This is an uncharacterized protein from Rickettsia conorii (strain ATCC VR-613 / Malish 7).